A 240-amino-acid polypeptide reads, in one-letter code: Purine nucleoside phosphorylase RP494 (240 aa).

Residues histidine 60, cysteine 96, and histidine 113 each coordinate Zn(2+).

Belongs to the purine nucleoside phosphorylase YfiH/LACC1 family. As to quaternary structure, homodimer. Cu(2+) serves as cofactor. Zn(2+) is required as a cofactor.

The catalysed reaction is adenosine + phosphate = alpha-D-ribose 1-phosphate + adenine. The enzyme catalyses S-methyl-5'-thioadenosine + phosphate = 5-(methylsulfanyl)-alpha-D-ribose 1-phosphate + adenine. It catalyses the reaction inosine + phosphate = alpha-D-ribose 1-phosphate + hypoxanthine. It carries out the reaction adenosine + H2O + H(+) = inosine + NH4(+). Functionally, purine nucleoside enzyme that catalyzes the phosphorolysis of adenosine and inosine nucleosides, yielding D-ribose 1-phosphate and the respective free bases, adenine and hypoxanthine. Also catalyzes the phosphorolysis of S-methyl-5'-thioadenosine into adenine and S-methyl-5-thio-alpha-D-ribose 1-phosphate. Also has adenosine deaminase activity. The polypeptide is Purine nucleoside phosphorylase RP494 (Rickettsia prowazekii (strain Madrid E)).